The sequence spans 161 residues: Pleiotrophin-B (161 aa).

The signal sequence occupies residues 1–23 (MHHQHGLFMLALLAFLLVMTVLG). Disulfide bonds link cysteine 41-cysteine 70, cysteine 49-cysteine 79, cysteine 56-cysteine 83, cysteine 93-cysteine 125, and cysteine 103-cysteine 135. Chondroitin sulfate binding stretches follow at residues 86–93 (KKQFGAEC) and 117–125 (KRALHNAEC). Positions 136-161 (GKVTKPKLQESKKKKKEGKNKEKLLD) are disordered. The interval 141–161 (PKLQESKKKKKEGKNKEKLLD) is chondroitin sulfate A binding.

It belongs to the pleiotrophin family. Expressed in high levels in brain and eye. Lower levels in bone. In the tailbud embryo stage, it is expressed exclusively in the central nervous system, especially in the hind region of the brain.

It localises to the secreted. In terms of biological role, secreted growth factor that mediates its signal through cell-surface proteoglycan and non-proteoglycan receptors. Binds cell-surface proteoglycan receptor via their chondroitin sulfate (CS) groups. Thereby regulates many processes like cell proliferation, cell survival, cell growth, cell differentiation and cell migration. Has antibacterial activity against both Gram-positive and Gram-negative bacteria. The sequence is that of Pleiotrophin-B (ptn-b) from Xenopus laevis (African clawed frog).